The sequence spans 150 residues: Transcription antitermination protein NusB (150 aa).

This sequence belongs to the NusB family.

Functionally, involved in transcription antitermination. Required for transcription of ribosomal RNA (rRNA) genes. Binds specifically to the boxA antiterminator sequence of the ribosomal RNA (rrn) operons. This Streptococcus pyogenes serotype M1 protein is Transcription antitermination protein NusB.